An 893-amino-acid chain; its full sequence is Probable disease resistance protein At1g62630 (893 aa).

The stretch at Gly-24–Glu-68 forms a coiled coil. In terms of domain architecture, NB-ARC spans Thr-136–Gly-440. Gly-179–Thr-186 is an ATP binding site. 6 LRR repeats span residues Val-516–Met-537, Glu-538–Lys-559, Lys-571–Leu-593, Ser-595–Lys-617, Lys-618–His-640, and Asn-641–Glu-663.

This sequence belongs to the disease resistance NB-LRR family.

Probable disease resistance protein. The polypeptide is Probable disease resistance protein At1g62630 (Arabidopsis thaliana (Mouse-ear cress)).